A 437-amino-acid chain; its full sequence is CCA-adding enzyme (437 aa).

Residues Ser47 and Arg50 each contribute to the ATP site. Residues Ser47 and Arg50 each contribute to the CTP site. Residues Glu59, Asp61, and Asp110 each contribute to the Mg(2+) site. His133, Lys152, and Tyr161 together coordinate ATP. CTP-binding residues include His133, Lys152, and Tyr161.

This sequence belongs to the tRNA nucleotidyltransferase/poly(A) polymerase family. Archaeal CCA-adding enzyme subfamily. In terms of assembly, homodimer. The cofactor is Mg(2+).

It carries out the reaction a tRNA precursor + 2 CTP + ATP = a tRNA with a 3' CCA end + 3 diphosphate. It catalyses the reaction a tRNA with a 3' CCA end + 2 CTP + ATP = a tRNA with a 3' CCACCA end + 3 diphosphate. Its function is as follows. Catalyzes the addition and repair of the essential 3'-terminal CCA sequence in tRNAs without using a nucleic acid template. Adds these three nucleotides in the order of C, C, and A to the tRNA nucleotide-73, using CTP and ATP as substrates and producing inorganic pyrophosphate. tRNA 3'-terminal CCA addition is required both for tRNA processing and repair. Also involved in tRNA surveillance by mediating tandem CCA addition to generate a CCACCA at the 3' terminus of unstable tRNAs. While stable tRNAs receive only 3'-terminal CCA, unstable tRNAs are marked with CCACCA and rapidly degraded. The structural flexibility of RNA controls the choice between CCA versus CCACCA addition: following the first CCA addition cycle, nucleotide-binding to the active site triggers a clockwise screw motion, producing torque on the RNA. This ejects stable RNAs, whereas unstable RNAs are refolded while bound to the enzyme and subjected to a second CCA catalytic cycle. The sequence is that of CCA-adding enzyme from Archaeoglobus fulgidus (strain ATCC 49558 / DSM 4304 / JCM 9628 / NBRC 100126 / VC-16).